Here is a 51-residue protein sequence, read N- to C-terminus: MARNKPLAKKLRLAKALKQNRRVPVWVIVKTNRRVLTHPKRRYWRRTKLKE.

Belongs to the eukaryotic ribosomal protein eL39 family. In terms of assembly, part of the 50S ribosomal subunit.

The protein is Large ribosomal subunit protein eL39 of Pyrococcus furiosus (strain ATCC 43587 / DSM 3638 / JCM 8422 / Vc1).